The chain runs to 142 residues: Large ribosomal subunit protein uL13 (142 aa).

Belongs to the universal ribosomal protein uL13 family. In terms of assembly, part of the 50S ribosomal subunit.

Functionally, this protein is one of the early assembly proteins of the 50S ribosomal subunit, although it is not seen to bind rRNA by itself. It is important during the early stages of 50S assembly. The chain is Large ribosomal subunit protein uL13 from Vibrio vulnificus (strain CMCP6).